A 429-amino-acid polypeptide reads, in one-letter code: D-inositol 3-phosphate glycosyltransferase (429 aa).

H20 is a 1D-myo-inositol 3-phosphate binding site. UDP-N-acetyl-alpha-D-glucosamine is bound by residues 26–27 (QP) and G34. 1D-myo-inositol 3-phosphate is bound by residues 31–36 (DAGGMN), K89, Y122, T146, and R166. UDP-N-acetyl-alpha-D-glucosamine-binding residues include R240, K245, and Q306. Residues Y315, R316, and A318 each coordinate Mg(2+). UDP-N-acetyl-alpha-D-glucosamine is bound by residues E328 and E336. T342 contributes to the Mg(2+) binding site.

It belongs to the glycosyltransferase group 1 family. MshA subfamily. In terms of assembly, homodimer.

The enzyme catalyses 1D-myo-inositol 3-phosphate + UDP-N-acetyl-alpha-D-glucosamine = 1D-myo-inositol 2-acetamido-2-deoxy-alpha-D-glucopyranoside 3-phosphate + UDP + H(+). In terms of biological role, catalyzes the transfer of a N-acetyl-glucosamine moiety to 1D-myo-inositol 3-phosphate to produce 1D-myo-inositol 2-acetamido-2-deoxy-glucopyranoside 3-phosphate in the mycothiol biosynthesis pathway. This chain is D-inositol 3-phosphate glycosyltransferase, found in Nocardiopsis dassonvillei (strain ATCC 23218 / DSM 43111 / CIP 107115 / JCM 7437 / KCTC 9190 / NBRC 14626 / NCTC 10488 / NRRL B-5397 / IMRU 509) (Actinomadura dassonvillei).